The chain runs to 365 residues: Zinc finger MYND domain-containing protein 12 (365 aa).

Cys-17, Cys-20, Cys-28, Cys-31, Cys-37, His-41, His-50, and Cys-54 together coordinate Zn(2+). The MYND-type; atypical zinc finger occupies 17 to 54; sequence CEVCEAPAERVCAACTVTYYCGVVHQKADWDSIHEKIC. TPR repeat units lie at residues 172 to 205 and 214 to 247; these read SLLH…ASCA and SGGY…WHAY.

In terms of tissue distribution, expressed predominantly in the testis.

The protein resides in the cell projection. Its subcellular location is the cilium. It localises to the flagellum. Its function is as follows. Required for sperm flagellum function and male fertility. In Homo sapiens (Human), this protein is Zinc finger MYND domain-containing protein 12 (ZMYND12).